The primary structure comprises 56 residues: Large ribosomal subunit protein bL32 (56 aa).

The disordered stretch occupies residues 1-37 (MAVQQNKKSRSRRDMRRSHDALTTAAVSVDKASGETH). A compositionally biased stretch (basic residues) spans 7-16 (KKSRSRRDMR).

This sequence belongs to the bacterial ribosomal protein bL32 family.

The polypeptide is Large ribosomal subunit protein bL32 (Haemophilus influenzae (strain PittEE)).